The chain runs to 290 residues: ATP synthase gamma chain (290 aa).

The protein belongs to the ATPase gamma chain family. As to quaternary structure, F-type ATPases have 2 components, CF(1) - the catalytic core - and CF(0) - the membrane proton channel. CF(1) has five subunits: alpha(3), beta(3), gamma(1), delta(1), epsilon(1). CF(0) has three main subunits: a, b and c.

The protein localises to the cell inner membrane. Produces ATP from ADP in the presence of a proton gradient across the membrane. The gamma chain is believed to be important in regulating ATPase activity and the flow of protons through the CF(0) complex. The polypeptide is ATP synthase gamma chain (Dinoroseobacter shibae (strain DSM 16493 / NCIMB 14021 / DFL 12)).